Here is a 604-residue protein sequence, read N- to C-terminus: MEGHVIVPLEKLSLELNNGGIMLNHDKDISALQEEISALRSRQRHLDHRRQEALDKLIDLKGSIRVFCRVRPSISANNFMTKSPVTVENEKIVVRAVGIKKEFSVDRVFDQESTQEDVFQEVKPILRSALDGHNVCILAYGQTGTGKTYTMEGNNGKLGIVPRAIQELFSHASQDSSSTYSFSISMLEVYMGTVRDLLTPRQPLFRSTECNTSSIISILATKSGAVEVEGLTDVAIQDLKKANQWYCRGRRARSTSWTNVNDVSSRSHCLTRITIKRSSGGTTEECSKLWLVDLGGSERLLKTGASGLTMDEGKAINLSLSALGDVIAALRRKRSHVPYRNSKLTQILSDSLGDGSKVLMVVHISPSDDDIGETVCSLSFAKRARSIESSKELSEDIKKLKQKRIAELDKEICDAEQELKDLNEQIKRAETSLEERKKLSSSACQALSDEKGSPRSTLVVVGHIDSAESPQATEKTKSRASHGSVPHFMSPTVCSRQRHSSASHSATKTRLTKSVNRYPAAELSGSHSFSYSSCKNAAKARSVAFSSSMPKMKCLPLKSDQINMSNNSIDSTAASAPRRRESFISRPAQRAPLHQHRRRMSSLT.

A coiled-coil region spans residues 22–61; the sequence is MLNHDKDISALQEEISALRSRQRHLDHRRQEALDKLIDLK. A Kinesin motor domain is found at 63–387; sequence SIRVFCRVRP…LSFAKRARSI (325 aa). 141 to 148 serves as a coordination point for ATP; the sequence is GQTGTGKT. The stretch at 383–443 forms a coiled coil; it reads RARSIESSKE…EERKKLSSSA (61 aa). 2 disordered regions span residues 465 to 511 and 565 to 604; these read DSAE…KTRL and SNNSIDSTAASAPRRRESFISRPAQRAPLHQHRRRMSSLT. Over residues 565–574 the composition is skewed to polar residues; the sequence is SNNSIDSTAA. A compositionally biased stretch (basic residues) spans 593-604; it reads LHQHRRRMSSLT.

Belongs to the TRAFAC class myosin-kinesin ATPase superfamily. Kinesin family. KIN-14 subfamily.

This is Kinesin-like protein KIN-14O from Oryza sativa subsp. japonica (Rice).